The following is a 221-amino-acid chain: Kinetochore protein Spc25 (221 aa).

The stretch at 63-114 (VIQRREEMEKRVSFMEELAQEVEATKQRNLVMREQIKQQKMLVRQRKNEIME) forms a coiled coil.

Belongs to the SPC25 family. In terms of assembly, component of the Ndc80 complex, which is composed of Ndc80, Nuf2 and Spc25.

The protein localises to the nucleus. It localises to the chromosome. Its subcellular location is the centromere. It is found in the kinetochore. In terms of biological role, acts as a component of the essential kinetochore-associated Ndc80 complex, which is required for chromosome segregation and spindle checkpoint activity during meiosis and mitosis. Required for kinetochore integrity and the organization of stable microtubule binding sites in the outer plate of the kinetochore. Participates in SAC signaling that responds specifically to disruptions in spindle microtubule dynamics. The NDC80 complex synergistically enhances the affinity of the SKA1 complex for microtubules and may allow the NDC80 complex to track depolymerizing microtubules. This is Kinetochore protein Spc25 from Drosophila eugracilis (Fruit fly).